The primary structure comprises 1300 residues: Insulin receptor-related protein (1300 aa).

The first 26 residues, 1–26 (MARPKLWPWGILLLVSLLSAGFNLDT), serve as a signal peptide directing secretion. Asn-47 carries N-linked (GlcNAc...) asparagine glycosylation. Disulfide bonds link Cys-214/Cys-222, Cys-216/Cys-228, Cys-229/Cys-237, Cys-233/Cys-246, Cys-249/Cys-258, Cys-262/Cys-274, Cys-280/Cys-300, Cys-304/Cys-317, and Cys-320/Cys-324. An N-linked (GlcNAc...) asparagine glycan is attached at Asn-311. Residues Asn-411, Asn-492, Asn-528, Asn-616, Asn-634, Asn-756, Asn-885, and Asn-898 are each glycosylated (N-linked (GlcNAc...) asparagine). 2 consecutive Fibronectin type-III domains span residues 483–603 (QTRT…TLPA) and 607–707 (VPQD…AQEA). A disulfide bridge connects residues Cys-657 and Cys-864. The tract at residues 740–762 (DAGRHRRAIGSPRPGGNSSDFEI) is disordered. At 747–921 (AIGSPRPGGN…PEEEDSGGLH (175 aa)) the chain is on the extracellular side. The Fibronectin type-III 3 domain occupies 818-912 (IPGKLSWEAA…DSVAFYIPGP (95 aa)). Residues 922 to 943 (ILLTVTPAGLMLLIILAALGFF) form a helical membrane-spanning segment. Residues 944–1300 (YSRKRNGTLY…CSLQNGGPEH (357 aa)) lie on the Cytoplasmic side of the membrane. The Protein kinase domain maps to 979-1254 (ISIIRELGQG…SIQKELRPSF (276 aa)). ATP-binding positions include 985 to 993 (LGQGSFGMV) and Lys-1013. The active-site Proton acceptor is the Asp-1115. Residues Tyr-1145 and Tyr-1146 each carry the phosphotyrosine; by autocatalysis modification. The segment at 1270-1300 (GLQPTTDAESSSPPTSKGASDCSLQNGGPEH) is disordered. Polar residues predominate over residues 1272–1300 (QPTTDAESSSPPTSKGASDCSLQNGGPEH).

Belongs to the protein kinase superfamily. Tyr protein kinase family. Insulin receptor subfamily. Probable tetramer of 2 alpha and 2 beta chains linked by disulfide bonds. The alpha chains contribute to the formation of the ligand-binding domain, while the beta chains carry the kinase domain. Autophosphorylated on tyrosine residues between pH 7.9 and pH 10.5.

The protein resides in the membrane. It catalyses the reaction L-tyrosyl-[protein] + ATP = O-phospho-L-tyrosyl-[protein] + ADP + H(+). Functionally, receptor with tyrosine-protein kinase activity. Functions as a pH sensing receptor which is activated by increased extracellular pH. Activates an intracellular signaling pathway that involves IRS1 and AKT1/PKB. In Cavia porcellus (Guinea pig), this protein is Insulin receptor-related protein (INSRR).